Consider the following 107-residue polypeptide: Large ribosomal subunit protein uL24 (107 aa).

The protein belongs to the universal ribosomal protein uL24 family. In terms of assembly, part of the 50S ribosomal subunit.

In terms of biological role, one of two assembly initiator proteins, it binds directly to the 5'-end of the 23S rRNA, where it nucleates assembly of the 50S subunit. One of the proteins that surrounds the polypeptide exit tunnel on the outside of the subunit. This is Large ribosomal subunit protein uL24 from Neisseria meningitidis serogroup C (strain 053442).